The chain runs to 368 residues: tRNA-specific 2-thiouridylase MnmA (368 aa).

Residues 11–18 (GMSGGVDS) and M37 contribute to the ATP site. Positions 97–99 (NPD) are interaction with target base in tRNA. C102 functions as the Nucleophile in the catalytic mechanism. Residues C102 and C199 are joined by a disulfide bond. G127 contributes to the ATP binding site. Residues 149-151 (KDQ) are interaction with tRNA. C199 (cysteine persulfide intermediate) is an active-site residue. Residues 311–312 (RY) form an interaction with tRNA region.

Belongs to the MnmA/TRMU family. Interacts with TusE.

Its subcellular location is the cytoplasm. It carries out the reaction S-sulfanyl-L-cysteinyl-[protein] + uridine(34) in tRNA + AH2 + ATP = 2-thiouridine(34) in tRNA + L-cysteinyl-[protein] + A + AMP + diphosphate + H(+). In terms of biological role, catalyzes the 2-thiolation of uridine at the wobble position (U34) of tRNA(Lys), tRNA(Glu) and tRNA(Gln), leading to the formation of s(2)U34, the first step of tRNA-mnm(5)s(2)U34 synthesis. Sulfur is provided by IscS, via a sulfur-relay system. Binds ATP and its substrate tRNAs. The chain is tRNA-specific 2-thiouridylase MnmA from Shigella boydii serotype 4 (strain Sb227).